Consider the following 112-residue polypeptide: Gastrula zinc finger protein XlCGF16.1 (112 aa).

4 C2H2-type zinc fingers span residues Tyr-6–His-28, Phe-34–His-56, Phe-62–His-84, and Phe-90–His-112.

It belongs to the krueppel C2H2-type zinc-finger protein family.

The protein localises to the nucleus. Functionally, may be involved in transcriptional regulation. The protein is Gastrula zinc finger protein XlCGF16.1 of Xenopus laevis (African clawed frog).